The following is a 157-amino-acid chain: Endoribonuclease YbeY (157 aa).

Zn(2+) contacts are provided by His-116, His-120, and His-126.

This sequence belongs to the endoribonuclease YbeY family. The cofactor is Zn(2+).

It localises to the cytoplasm. Its function is as follows. Single strand-specific metallo-endoribonuclease involved in late-stage 70S ribosome quality control and in maturation of the 3' terminus of the 16S rRNA. This Pseudarthrobacter chlorophenolicus (strain ATCC 700700 / DSM 12829 / CIP 107037 / JCM 12360 / KCTC 9906 / NCIMB 13794 / A6) (Arthrobacter chlorophenolicus) protein is Endoribonuclease YbeY.